A 442-amino-acid polypeptide reads, in one-letter code: tRNA-2-methylthio-N(6)-dimethylallyladenosine synthase (442 aa).

Residues 3 to 120 (NKLYIRTFGC…LPNMLNDALN (118 aa)) enclose the MTTase N-terminal domain. Positions 12, 49, 83, 157, 161, and 164 each coordinate [4Fe-4S] cluster. Positions 143 to 375 (RTNSVTAFVS…QKTINNNTEH (233 aa)) constitute a Radical SAM core domain. Positions 378–440 (QLMIGSIQKV…GNSLMGDLLT (63 aa)) constitute a TRAM domain.

The protein belongs to the methylthiotransferase family. MiaB subfamily. Monomer. Requires [4Fe-4S] cluster as cofactor.

The protein localises to the cytoplasm. It catalyses the reaction N(6)-dimethylallyladenosine(37) in tRNA + (sulfur carrier)-SH + AH2 + 2 S-adenosyl-L-methionine = 2-methylsulfanyl-N(6)-dimethylallyladenosine(37) in tRNA + (sulfur carrier)-H + 5'-deoxyadenosine + L-methionine + A + S-adenosyl-L-homocysteine + 2 H(+). Catalyzes the methylthiolation of N6-(dimethylallyl)adenosine (i(6)A), leading to the formation of 2-methylthio-N6-(dimethylallyl)adenosine (ms(2)i(6)A) at position 37 in tRNAs that read codons beginning with uridine. The polypeptide is tRNA-2-methylthio-N(6)-dimethylallyladenosine synthase (Vesicomyosocius okutanii subsp. Calyptogena okutanii (strain HA)).